Here is an 82-residue protein sequence, read N- to C-terminus: Small ribosomal subunit protein uS17 (82 aa).

Belongs to the universal ribosomal protein uS17 family. As to quaternary structure, part of the 30S ribosomal subunit.

In terms of biological role, one of the primary rRNA binding proteins, it binds specifically to the 5'-end of 16S ribosomal RNA. This Ehrlichia ruminantium (strain Gardel) protein is Small ribosomal subunit protein uS17.